Reading from the N-terminus, the 602-residue chain is Elongation factor 4 (602 aa).

Residues 7–189 (SRLRNFCIIA…AVVERVPPPK (183 aa)) enclose the tr-type G domain. GTP contacts are provided by residues 19–24 (DHGKST) and 136–139 (NKVD).

The protein belongs to the TRAFAC class translation factor GTPase superfamily. Classic translation factor GTPase family. LepA subfamily.

It is found in the cell inner membrane. The enzyme catalyses GTP + H2O = GDP + phosphate + H(+). Its function is as follows. Required for accurate and efficient protein synthesis under certain stress conditions. May act as a fidelity factor of the translation reaction, by catalyzing a one-codon backward translocation of tRNAs on improperly translocated ribosomes. Back-translocation proceeds from a post-translocation (POST) complex to a pre-translocation (PRE) complex, thus giving elongation factor G a second chance to translocate the tRNAs correctly. Binds to ribosomes in a GTP-dependent manner. This Prochlorococcus marinus (strain MIT 9211) protein is Elongation factor 4.